A 406-amino-acid polypeptide reads, in one-letter code: Proteasome-activating nucleotidase 1 (406 aa).

The stretch at 13–72 forms a coiled coil; the sequence is YDKDSASQQEKITALQERLEVLETQNEEMRDKLLDTNAENNKYQQKLERLTHENKKLKQS. ATP-binding positions include 194-199 and His333; that span reads GTGKTM. Positions 404–406 are docks into pockets in the proteasome alpha-ring to cause gate opening; it reads AFA.

This sequence belongs to the AAA ATPase family. Homododecamer, in a proposed two stacked hexameric ring configuration, but may also form homohexamer. The hexameric complex has likely a two-ring architecture resembling a top hat that caps the 20S proteasome core at one or both ends. Upon ATP-binding, the C-terminus of PAN probably interacts with the alpha-rings of the proteasome core by binding to the intersubunit pockets. Interacts with SAMP1-MoaE conjugate in vitro, but does not bind to SAMP1 or MoaE alone. Interacts with NcsA.

The protein localises to the cytoplasm. ATPase activity is inhibited by EDTA in vitro. ATPase which is responsible for recognizing, binding, unfolding and translocation of substrate proteins into the archaeal 20S proteasome core particle. Is essential for opening the gate of the 20S proteasome via an interaction with its C-terminus, thereby allowing substrate entry and access to the site of proteolysis. Thus, the C-terminus of the proteasomal ATPase functions like a 'key in a lock' to induce gate opening and therefore regulate proteolysis. Unfolding activity requires energy from ATP hydrolysis, whereas ATP binding alone promotes ATPase-20S proteasome association which triggers gate opening, and supports translocation of unfolded substrates. Is also able to cleave other nucleoside triphosphates including GTP and TTP, but the rate of hydrolysis is 4- to 5-fold slower than for ATP. In Haloferax volcanii (strain ATCC 29605 / DSM 3757 / JCM 8879 / NBRC 14742 / NCIMB 2012 / VKM B-1768 / DS2) (Halobacterium volcanii), this protein is Proteasome-activating nucleotidase 1.